We begin with the raw amino-acid sequence, 214 residues long: MVIDKSIPKATAKRLSLYYRIFKRFHADQVEKASSKQIADAMGIDSATVRRDFSYFGELGRRGFGYDVTKLMNFFADLLNDHSTTNVILVGCGNIGRALLHYRFHDRNKMQIAMGFDTDDNALVGTKTADNIPVHGISSVKERIANTDIETAILTVPSIHAQKVTDQLIEAGIKGILSFAPVHLQVPKGVIVQSVDLTSELQTLLYFMNQNHLD.

Positions 17-56 (LYYRIFKRFHADQVEKASSKQIADAMGIDSATVRRDFSYF) form a DNA-binding region, H-T-H motif. 91–96 (GCGNIG) is a binding site for NAD(+).

Belongs to the transcriptional regulatory Rex family. In terms of assembly, homodimer.

The protein resides in the cytoplasm. Its function is as follows. Modulates transcription in response to changes in cellular NADH/NAD(+) redox state. The polypeptide is Redox-sensing transcriptional repressor Rex (Streptococcus pyogenes serotype M4 (strain MGAS10750)).